We begin with the raw amino-acid sequence, 577 residues long: Cleavage stimulation factor subunit 2 (577 aa).

A Phosphoserine modification is found at Ser14. The RRM domain occupies 16–94; sequence RSVFVGNIPY…RALRVDNAAS (79 aa). The interactions with CSTF3 and SYMPK stretch occupies residues 108–248; it reads APVIESPYGE…VNGAPPLMQA (141 aa). Residue Lys189 forms a Glycyl lysine isopeptide (Lys-Gly) (interchain with G-Cter in SUMO2) linkage. The interval 206–243 is disordered; sequence QPVHGAGPGSGSNVSMNQQNPQAPQAQSLGGMHVNGAP. The segment covering 222–232 has biased composition (low complexity); sequence NQQNPQAPQAQ. An Omega-N-methylarginine modification is found at Arg308. The tract at residues 340-409 is disordered; sequence EVEPRGYLGP…DGRGGRDPRG (70 aa). A compositionally biased stretch (basic and acidic residues) spans 360 to 373; the sequence is PGHESRGPPPHELR. The 1; approximate repeat unit spans residues 410-414; it reads IDARG. The tract at residues 410–469 is 12 X 5 AA tandem repeats of M-E-A-R-[AG]; it reads IDARGMEARAMEARGLDARGLEARAMEARAMEARAMEARAMEARAMEVRGMEARGMDTRG. Tandem repeats lie at residues 415 to 419 and 420 to 424. One copy of the 4; approximate repeat lies at 425–429; that stretch reads LDARG. One copy of the 5; approximate repeat lies at 430–434; that stretch reads LEARA. Tandem repeats lie at residues 435 to 439, 440 to 444, 445 to 449, and 450 to 454. Residues 455 to 459 form a 10; approximate repeat; it reads MEVRG. Residues 460–464 form repeat 11; it reads MEARG. The stretch at 465-469 is one 12; approximate repeat; sequence MDTRG. 2 positions are modified to omega-N-methylarginine: Arg468 and Arg475. The segment at 508–532 is disordered; it reads GMQGASIQGGSQPGGFSPGQNQVTP. Residues 514 to 577 are interaction with RPO2TC1; that stretch reads IQGGSQPGGF…EQIQKSTGAP (64 aa). 2 positions are modified to phosphoserine: Ser518 and Ser524.

In terms of assembly, the CSTF complex is composed of CSTF1 (50 kDa subunit), CSTF2 (64 kDa subunit) and CSTF3 (77 kDa subunit). CSTF2 directly interacts with CSTF3, SYMPK and RPO2TC1. Interacts with HSF1 in heat-stressed cells. Interacts with CPSF2, CPSF3 and FIP1L1. Interacts with DDX1.

Its subcellular location is the nucleus. In terms of biological role, one of the multiple factors required for polyadenylation and 3'-end cleavage of mammalian pre-mRNAs. This subunit is directly involved in the binding to pre-mRNAs. The polypeptide is Cleavage stimulation factor subunit 2 (CSTF2) (Homo sapiens (Human)).